The following is an 80-amino-acid chain: Acyl carrier protein (80 aa).

The Carrier domain maps to 2-77 (KNIEERIKKI…KSIDFIQNKN (76 aa)). Serine 37 bears the O-(pantetheine 4'-phosphoryl)serine mark.

This sequence belongs to the acyl carrier protein (ACP) family. In terms of processing, 4'-phosphopantetheine is transferred from CoA to a specific serine of apo-ACP by AcpS. This modification is essential for activity because fatty acids are bound in thioester linkage to the sulfhydryl of the prosthetic group.

Its subcellular location is the cytoplasm. It participates in lipid metabolism; fatty acid biosynthesis. Carrier of the growing fatty acid chain in fatty acid biosynthesis. This is Acyl carrier protein from Buchnera aphidicola subsp. Acyrthosiphon pisum (strain 5A).